Reading from the N-terminus, the 138-residue chain is MAKSIPKTGSRKNVRIGSRNQTRKIPKGIIHVQASFNNTIVTITDVRGRVISWSSAGTCGFKGTRRGTPFAAQTAAGNAIRTVSDQGMQRAEIMIKGPGLGRDAALRAIRRSGILLNFIRDVTPMPHNGCRSPKKRRV.

Positions 1–22 (MAKSIPKTGSRKNVRIGSRNQT) are disordered.

It belongs to the universal ribosomal protein uS11 family. Part of the 30S ribosomal subunit.

Its subcellular location is the plastid. It is found in the chloroplast. This chain is Small ribosomal subunit protein uS11c, found in Phaseolus angularis (Azuki bean).